The sequence spans 725 residues: Dipeptidyl-peptidase 5 (725 aa).

An N-terminal signal peptide occupies residues Met-1–Ala-18. N-linked (GlcNAc...) asparagine glycosylation is found at Asn-75, Asn-96, Asn-153, Asn-258, Asn-383, and Asn-453. Catalysis depends on Ser-563, which acts as the Charge relay system. N-linked (GlcNAc...) asparagine glycosylation occurs at Asn-610. Active-site charge relay system residues include Asp-646 and His-678.

It belongs to the peptidase S9C family.

It localises to the secreted. This is Dipeptidyl-peptidase 5 from Aspergillus oryzae (strain ATCC 42149 / RIB 40) (Yellow koji mold).